The primary structure comprises 1430 residues: MGLDFDAVEYCKGVKTQQSQPPFACPVRGCDRSYKTIMGLQYHLMKYDHDNPQPLTPVLTPSRKKARSRSGGHHSTPRPHKDHPTPGGGGAEARNGCSSASAGGGSASGVSARQYANPESLVSYNEEEATVTFNLDGKSVRLGIDDALPLVEDEEFAALVARGCILNADAPPLEENAPWARVQVPVARVAEIPDYRVSDAPPRPLAYYRFIEKSLEELDGEVEYDVDEEDSAWLEHMNEERQRLGLNAVGIDTMELLMDRLEKESHFQAAANGTPTGVEVDDDAVCCICLDGECQNTNVILFCDMCNLAVHQDCYGVPYIPEGQWLCRRCLQSPSKPVNCVLCPNAGGAFKQTDHGQWAHVVCALWIPEVRFANTVFLEPIDSIETIPPARWRLTCYVCKEKGLGACIQCHRNSCYAAFHVTCAQQAGLYMTMDTVKDGHNDSSMHVQKFAYCHAHTPADAKLKMNVPDFEDTRHKMKEARKALAKKRSTAPVVLIPTIPPDRVQEIATMVTMQRKKEFLDRIIAYWTLKRHYRNGVPLLRRLQSQGNNHGVIQRNGIEGSPDTGELYRQLKYWQCLRQDLERARLLCELVRKREKLKVAFVRISEEVVMLQLNPLEAALNKLLDALEARDSMQIFREPVDTSEVPDYTDIVKQPMDLGTMRAKLKECQYNSLEQLEADFDLMIQNCLAYNNKDTVFYRAGIRMRDQAAPLFVQVRKELQRDGLLARSQRYHVDHVEAEVEQELRLLLAAPASEGIVQKLLILADKSQVLKNPTYRTKKIKQIRLEISRMRKSLQKARFAARHSSHANQSQSDDEDTLGGSPSKKRTRKRFNSSGVDMELGHDDDDEEEDSDEDSMGEDTVSKDLLNSTQTPPCSPIKSLNNSSSPVGINRRTAILLTRKAQAALKRPSEPLTTPVKEEQHNSQSSNTQSTSGSSSSVTTAATAASSGAGTLNHVLSSAPPTASSFALTQNNSSGGGALASGTGIGGSSSAGTAAAASLTSTALAMNSKLSANLPVKSPKRPGRYRRVPEVRHSSSMSPKKSPNPAVTVSQALPMPETLPFERIPDSFRVYRANNQRDVSDSDDAPSQSSSPCSSCSDFSMSGSCSDFDSDEASEGDADGDPDRDGGRSRSEERDSTSQEGTTDAMDMQHASLNNVQGNNGNMAISSSSGGSGGSSSEDDELEERPLSARQNKPMKVGTRGTPTPTTMARAVALSAGRGRGKRRSNLSESTSSTATPPPLRRAGKLRSATPNASPLVNNIKARRNTTAAGSAPLTNNNRSKHSEDSASSERHNNHSHGQKPALEPLQLVWAKCRGYPWYPALILDPKTPKGFVYNGVPLPAPPTDVLALRKNCLDEIVFLVLFFDVKRTWQWLPANKLDILGIDKQLDQQKLVESRKPAERKAVKKAYQDALHYQSQVSDLEGQGPDPIM.

Residues 23–49 (FACPVRGCDRSYKTIMGLQYHLMKYDH) form a C2H2-type zinc finger. The tract at residues 51–111 (NPQPLTPVLT…AGGGSASGVS (61 aa)) is disordered. The span at 62–81 (SRKKARSRSGGHHSTPRPHK) shows a compositional bias: basic residues. Residues 283-333 (DAVCCICLDGECQNTNVILFCDMCNLAVHQDCYGVPYIPEGQWLCRRCLQS) form a PHD-type 1 zinc finger. Residues C286, C289, C303, C306, H311, C314, C327, and C330 each coordinate Zn(2+). The C2HC pre-PHD-type zinc-finger motif lies at 337–370 (PVNCVLCPNAGGAFKQTDHGQWAHVVCALWIPEV). The PHD-type 2 zinc-finger motif lies at 394–457 (LTCYVCKEKG…QKFAYCHAHT (64 aa)). In terms of domain architecture, Bromo spans 611–715 (LQLNPLEAAL…DQAAPLFVQV (105 aa)). Over residues 796–805 (KARFAARHSS) the composition is skewed to basic residues. Disordered stretches follow at residues 796 to 887 (KARF…SSPV), 901 to 942 (AQAA…TTAA), 1012 to 1054 (ANLP…QALP), and 1076 to 1301 (QRDV…GQKP). A compositionally biased stretch (acidic residues) spans 842–857 (HDDDDEEEDSDEDSMG). Residues 865-887 (LLNSTQTPPCSPIKSLNNSSSPV) are compositionally biased toward polar residues. Composition is skewed to low complexity over residues 922-942 (NSQSSNTQSTSGSSSSVTTAA), 1034-1043 (SSSMSPKKSP), and 1085-1107 (APSQSSSPCSSCSDFSMSGSCSD). Positions 1108-1120 (FDSDEASEGDADG) are enriched in acidic residues. Basic and acidic residues predominate over residues 1121-1137 (DPDRDGGRSRSEERDST). Composition is skewed to polar residues over residues 1151–1165 (ASLNNVQGNNGNMAI) and 1265–1278 (NTTAAGSAPLTNNN). Positions 1281–1293 (KHSEDSASSERHN) are enriched in basic and acidic residues. A PWWP domain is found at 1305 to 1378 (PLQLVWAKCR…TWQWLPANKL (74 aa)).

As to quaternary structure, component of the Enok complex composed of at least Br140, enok, Eaf6 and Ing5. As part of the Enok complex, interacts with elg1 and the Elg1 RFC-like complex.

The protein localises to the nucleus. Functionally, scaffold subunit of the histone acetyltransferase (HAT) Enok complex which has histone H3 acetyltransferase activity. As part of the Enok complex, associates with the Elg1 RFC-like complex and down-regulates its PCNA-unloading function to promote the G1/S transition. May also play a role in maintaining the protein levels and stability of enok. In Drosophila melanogaster (Fruit fly), this protein is Bromodomain-containing protein homolog.